The primary structure comprises 277 residues: Ras suppressor protein 1 (277 aa).

Positions 1-24 (MSKSLKKLVEESREKNQPEVDMSD) are disordered. Ser-2 bears the N-acetylserine mark. Residues 7–24 (KLVEESREKNQPEVDMSD) show a composition bias toward basic and acidic residues. 7 LRR repeats span residues 41–63 (HITQ…AELK), 64–85 (NLEV…ISSL), 87–109 (KLKH…GSLP), 110–133 (ALEV…FFYL), 135–156 (TLRA…IGKL), 158–179 (KLQI…IGEL), and 181–202 (QLKE…LGNL). A disordered region spans residues 250–277 (MQANPEPPKKNNDKSKKISRKPLAAKNR). The span at 256–265 (PPKKNNDKSK) shows a compositional bias: basic and acidic residues.

In terms of biological role, potentially plays a role in the Ras signal transduction pathway. Capable of suppressing v-Ras transformation in vitro. This Homo sapiens (Human) protein is Ras suppressor protein 1 (RSU1).